Here is a 108-residue protein sequence, read N- to C-terminus: Putative disulfide oxidoreductase YuzD (108 aa).

The cysteines at positions 16 and 19 are disulfide-linked.

In Bacillus subtilis (strain 168), this protein is Putative disulfide oxidoreductase YuzD (yuzD).